Consider the following 81-residue polypeptide: Small ribosomal subunit protein bS16 (81 aa).

This sequence belongs to the bacterial ribosomal protein bS16 family.

This is Small ribosomal subunit protein bS16 from Teredinibacter turnerae (strain ATCC 39867 / T7901).